The primary structure comprises 587 residues: MKDTIRQLIQQALDQLTADGTLPAGLTPDIQVENTKDRSHGDFASNIAMMLAKPAGMKPRDLAARLVEAIPAHEQLAKVEIAGPGFLNFFQDHVWLAASLDRALADERLGVRKAGPAQRVVIDLSSPNLAKEMHVGHLRSTIIGDAVARVLEFLGDTVIRQNHVGDWGTQFGMLLAYLEEQPIDAEAELHDLEVFYRAAKKRFDESPEFADRARELVVKLQAGDPDCLRLWTRFNEISLSHCQKVYDRLGVKLSMADVMGESAYNDDLAQVVADLTAKGLLTEDNGALCVFLEEFKNAEGNPLPVIVQKAGGGYLYATTDLAAMRYRHNVLHADRVLYFVDQRQALHFQQVFEVARRAGFVPAGMELEHMGFGTMNGADGRPFKTRDGGTVKLIDLLEEAESRAYALVKERNEQRAERGEEPFDEVQLREIGRVVGIDSVKYADLSKHRTSDYSFNFELMLSFEGNTAPYLLYACTRVASVFRKLGQGREQLGGKIVLEQPQELALAAQLAQFGDLINNVALKGVPHLLCAYLYELAGLFSSFYEHCPILTAEDPAQKDSRLRLAALTGRTLEQGLELLGLKTLERM.

A 'HIGH' region motif is present at residues 127-137 (PNLAKEMHVGH).

Belongs to the class-I aminoacyl-tRNA synthetase family. As to quaternary structure, monomer.

It localises to the cytoplasm. The enzyme catalyses tRNA(Arg) + L-arginine + ATP = L-arginyl-tRNA(Arg) + AMP + diphosphate. The chain is Arginine--tRNA ligase from Pseudomonas aeruginosa (strain LESB58).